A 394-amino-acid polypeptide reads, in one-letter code: Acetate kinase (394 aa).

Asn-7 serves as a coordination point for Mg(2+). Position 14 (Lys-14) interacts with ATP. Position 88 (Arg-88) interacts with substrate. Catalysis depends on Asp-145, which acts as the Proton donor/acceptor. ATP contacts are provided by residues 205 to 209 (HLGNG), 279 to 281 (DFR), and 327 to 331 (GIGEN). A Mg(2+)-binding site is contributed by Glu-379.

This sequence belongs to the acetokinase family. Homodimer. The cofactor is Mg(2+). Requires Mn(2+) as cofactor.

The protein localises to the cytoplasm. It catalyses the reaction acetate + ATP = acetyl phosphate + ADP. It participates in metabolic intermediate biosynthesis; acetyl-CoA biosynthesis; acetyl-CoA from acetate: step 1/2. Functionally, catalyzes the formation of acetyl phosphate from acetate and ATP. Can also catalyze the reverse reaction. This chain is Acetate kinase, found in Campylobacter lari (strain RM2100 / D67 / ATCC BAA-1060).